Here is a 73-residue protein sequence, read N- to C-terminus: Putative sulfur carrier protein AF_0556 (73 aa).

Residue cysteine 11 is the Cysteine persulfide intermediate of the active site.

This sequence belongs to the sulfur carrier protein TusA family.

The sequence is that of Putative sulfur carrier protein AF_0556 from Archaeoglobus fulgidus (strain ATCC 49558 / DSM 4304 / JCM 9628 / NBRC 100126 / VC-16).